A 552-amino-acid polypeptide reads, in one-letter code: Rqc2 homolog RqcH (552 aa).

2 coiled-coil regions span residues 271–317 (RDRV…QKGE) and 357–398 (NAQR…MLGQ).

It belongs to the NEMF family. Associates with stalled 50S ribosomal subunits, binds to RqcH. Recombinant protein interacts with the N-terminal 30 kDa of human fibronectin (FN1).

Key component of the ribosome quality control system (RQC), a ribosome-associated complex that mediates the extraction of incompletely synthesized nascent chains from stalled ribosomes and their subsequent degradation. RqcH recruits Ala-charged tRNA, and with RqcP directs the elongation of stalled nascent chains on 50S ribosomal subunits, leading to non-templated C-terminal alanine extensions (Ala tail). The Ala tail promotes nascent chain degradation. May add between 1 and at least 8 Ala residues. Binds to stalled 50S ribosomal subunits. The protein is Rqc2 homolog RqcH of Streptococcus suis (strain 05ZYH33).